Consider the following 426-residue polypeptide: Serine/threonine-protein kinase ssn3 (426 aa).

A Protein kinase domain is found at 41–368 (YHIVGFISSG…AQEALEHPYF (328 aa)). ATP contacts are provided by residues 47 to 55 (ISSGTYGRV) and Lys-71. The Proton acceptor role is filled by Asp-173. The tract at residues 390–426 (RVTQDDNDIRSGSLPGTKRSGLPDDSLMGRAAKRLKE) is disordered.

This sequence belongs to the protein kinase superfamily. CMGC Ser/Thr protein kinase family. CDC2/CDKX subfamily. In terms of assembly, component of the srb8-11 complex, a regulatory module of the Mediator complex. It depends on Mg(2+) as a cofactor.

The protein localises to the nucleus. It catalyses the reaction L-seryl-[protein] + ATP = O-phospho-L-seryl-[protein] + ADP + H(+). The enzyme catalyses L-threonyl-[protein] + ATP = O-phospho-L-threonyl-[protein] + ADP + H(+). It carries out the reaction [DNA-directed RNA polymerase] + ATP = phospho-[DNA-directed RNA polymerase] + ADP + H(+). In terms of biological role, component of the srb8-11 complex. The srb8-11 complex is a regulatory module of the Mediator complex which is itself involved in regulation of basal and activated RNA polymerase II-dependent transcription. The srb8-11 complex may be involved in the transcriptional repression of a subset of genes regulated by Mediator. It may inhibit the association of the Mediator complex with RNA polymerase II to form the holoenzyme complex. The srb8-11 complex phosphorylates the C-terminal domain (CTD) of the largest subunit of RNA polymerase II. The sequence is that of Serine/threonine-protein kinase ssn3 (ssn3) from Aspergillus clavatus (strain ATCC 1007 / CBS 513.65 / DSM 816 / NCTC 3887 / NRRL 1 / QM 1276 / 107).